The chain runs to 315 residues: Homoserine kinase (315 aa).

Position 97–107 (97–107) interacts with ATP; the sequence is PPARGLGSSAT.

Belongs to the GHMP kinase family. Homoserine kinase subfamily.

The protein localises to the cytoplasm. It carries out the reaction L-homoserine + ATP = O-phospho-L-homoserine + ADP + H(+). Its pathway is amino-acid biosynthesis; L-threonine biosynthesis; L-threonine from L-aspartate: step 4/5. Functionally, catalyzes the ATP-dependent phosphorylation of L-homoserine to L-homoserine phosphate. This chain is Homoserine kinase, found in Prochlorococcus marinus (strain NATL2A).